We begin with the raw amino-acid sequence, 304 residues long: Probable HTH-type transcriptional regulator LgoR (304 aa).

An HTH gntR-type domain is found at 1-70 (MSRSQNLRHN…VGNDYVIARK (70 aa)). The H-T-H motif DNA-binding region spans 31-50 (QSALAEMYNISRTTVRHILS).

Its function is as follows. May be a positive transcriptional regulator for lgoD and/or lgoT. Is essential for growth on L-galactonate as the sole carbon source. The polypeptide is Probable HTH-type transcriptional regulator LgoR (lgoR) (Escherichia coli (strain K12)).